Consider the following 230-residue polypeptide: 2-C-methyl-D-erythritol 4-phosphate cytidylyltransferase (230 aa).

It belongs to the IspD/TarI cytidylyltransferase family. IspD subfamily.

It carries out the reaction 2-C-methyl-D-erythritol 4-phosphate + CTP + H(+) = 4-CDP-2-C-methyl-D-erythritol + diphosphate. It participates in isoprenoid biosynthesis; isopentenyl diphosphate biosynthesis via DXP pathway; isopentenyl diphosphate from 1-deoxy-D-xylulose 5-phosphate: step 2/6. Its function is as follows. Catalyzes the formation of 4-diphosphocytidyl-2-C-methyl-D-erythritol from CTP and 2-C-methyl-D-erythritol 4-phosphate (MEP). The sequence is that of 2-C-methyl-D-erythritol 4-phosphate cytidylyltransferase from Synechocystis sp. (strain ATCC 27184 / PCC 6803 / Kazusa).